A 121-amino-acid polypeptide reads, in one-letter code: Chronic lymphocytic leukemia up-regulated protein 1 (121 aa).

As to expression, specifically expressed in chronic lymphocytic leukemia (CLL) cells from patients without immunoglobulin heavy-chain hypermutations. Expression is detected in all CLL cells and levels are similar in patients before and after treatment.

Its subcellular location is the cytoplasm. The polypeptide is Chronic lymphocytic leukemia up-regulated protein 1 (CLLU1) (Homo sapiens (Human)).